Consider the following 459-residue polypeptide: Arginine biosynthesis bifunctional protein ArgJ, mitochondrial (459 aa).

Substrate contacts are provided by Thr187, Lys216, Thr227, Glu314, Asn454, and Thr459. Thr227 acts as the Nucleophile in catalysis.

Belongs to the ArgJ family. In terms of assembly, heterodimer of an alpha and a beta chain. In terms of processing, the alpha and beta chains are autoproteolytically processed from a single precursor protein within the mitochondrion.

Its subcellular location is the mitochondrion matrix. It carries out the reaction N(2)-acetyl-L-ornithine + L-glutamate = N-acetyl-L-glutamate + L-ornithine. The catalysed reaction is L-glutamate + acetyl-CoA = N-acetyl-L-glutamate + CoA + H(+). It functions in the pathway amino-acid biosynthesis; L-arginine biosynthesis; L-ornithine and N-acetyl-L-glutamate from L-glutamate and N(2)-acetyl-L-ornithine (cyclic): step 1/1. Its pathway is amino-acid biosynthesis; L-arginine biosynthesis; N(2)-acetyl-L-ornithine from L-glutamate: step 1/4. Its function is as follows. Catalyzes two activities which are involved in the cyclic version of arginine biosynthesis: the synthesis of acetylglutamate from glutamate and acetyl-CoA, and of ornithine by transacetylation between acetylornithine and glutamate. The chain is Arginine biosynthesis bifunctional protein ArgJ, mitochondrial from Uncinocarpus reesii (strain UAMH 1704).